The sequence spans 158 residues: Cyclic pyranopterin monophosphate synthase (158 aa).

Substrate is bound by residues 76 to 78 (LCH) and 114 to 115 (ME). Residue aspartate 129 is part of the active site.

The protein belongs to the MoaC family. Homohexamer; trimer of dimers.

It catalyses the reaction (8S)-3',8-cyclo-7,8-dihydroguanosine 5'-triphosphate = cyclic pyranopterin phosphate + diphosphate. It participates in cofactor biosynthesis; molybdopterin biosynthesis. Its function is as follows. Catalyzes the conversion of (8S)-3',8-cyclo-7,8-dihydroguanosine 5'-triphosphate to cyclic pyranopterin monophosphate (cPMP). This is Cyclic pyranopterin monophosphate synthase from Shewanella baltica (strain OS155 / ATCC BAA-1091).